We begin with the raw amino-acid sequence, 393 residues long: Matrix metalloproteinase-23 (393 aa).

The Cytoplasmic segment spans residues 1 to 20; the sequence is MGRGACVPSAASGAGDRARQ. The propeptide occupies 1-81; it reads MGRGACVPSA…PHPPVPRRRR (81 aa). A helical; Signal-anchor for type II membrane protein membrane pass occupies residues 21 to 41; the sequence is LGAVLGALCLFPALVLLAWPG. At 42 to 393 the chain is on the lumenal side; it reads TPANGAGARV…TYSWRIRVRS (352 aa). Positions 60 to 79 are disordered; it reads TSGVLASGSLGPPHPPVPRR. Asn-95 and Asn-151 each carry an N-linked (GlcNAc...) asparagine glycan. His-214 provides a ligand contact to Zn(2+). Residue Glu-215 is part of the active site. Zn(2+) contacts are provided by His-218 and His-224. Residue Asn-235 is glycosylated (N-linked (GlcNAc...) asparagine). One can recognise a ShKT domain in the interval 258 to 292; it reads CLDRLFVCASWARRGFCDTRRRLMKRLCPSSCDFC. Disulfide bonds link Cys-258/Cys-292, Cys-265/Cys-285, and Cys-274/Cys-289. Residues 298–383 enclose the Ig-like C2-type domain; it reads PTVAATPPPP…VVRRRQRVLS (86 aa). N-linked (GlcNAc...) asparagine glycosylation is present at Asn-319. Cys-324 and Cys-373 are oxidised to a cystine.

This sequence belongs to the peptidase M10A family. Zn(2+) serves as cofactor. N-glycosylated. In terms of processing, proteolytic cleavage might yield an active form.

The protein localises to the membrane. Its subcellular location is the endoplasmic reticulum membrane. Its function is as follows. Protease. May regulate the surface expression of some potassium channels by retaining them in the endoplasmic reticulum. The protein is Matrix metalloproteinase-23 (MMP23) of Bos taurus (Bovine).